We begin with the raw amino-acid sequence, 261 residues long: Cytochrome c oxidase subunit 3 (261 aa).

The Mitochondrial matrix segment spans residues 1-15; it reads MTKQMHAFHMVNPSP. The chain crosses the membrane as a helical span at residues 16–34; sequence WPLTGAASAFMLTSGLAMW. The Mitochondrial intermembrane segment spans residues 35 to 40; the sequence is FHKHSN. The helical transmembrane segment at 41 to 66 threads the bilayer; it reads TLIFLSMILMLLTMYQWWRDITREGT. Residues 67 to 72 lie on the Mitochondrial matrix side of the membrane; the sequence is FQGHHT. The helical transmembrane segment at 73–105 threads the bilayer; the sequence is SLVQKSLRYGMILFIVSEVCFFFGFFWTFYHSS. At 106-128 the chain is on the mitochondrial intermembrane side; it reads LSPSPDLGMMWPPKGVIPLDPFE. The chain crosses the membrane as a helical span at residues 129 to 152; the sequence is IPLLNTAILLGSGVSVTWAHHSLM. The Mitochondrial matrix portion of the chain corresponds to 153-155; it reads EKT. Residues 156 to 183 form a helical membrane-spanning segment; the sequence is HKDMVISLSITIILGIYFTLLQGMEYFN. At 184–190 the chain is on the mitochondrial intermembrane side; that stretch reads STFNISD. Residues 191 to 223 traverse the membrane as a helical segment; that stretch reads NAYGSTFFVATGFHGGHVIIGTLFLTVCLLRQL. At 224–232 the chain is on the mitochondrial matrix side; the sequence is MFHFTSSHH. The chain crosses the membrane as a helical span at residues 233–256; that stretch reads FGFEAAAWYWHFVDVVWLFLFISI. Residues 257–261 lie on the Mitochondrial intermembrane side of the membrane; the sequence is YWWGS.

The protein belongs to the cytochrome c oxidase subunit 3 family. Component of the cytochrome c oxidase (complex IV, CIV), a multisubunit enzyme composed of 14 subunits. The complex is composed of a catalytic core of 3 subunits MT-CO1, MT-CO2 and MT-CO3, encoded in the mitochondrial DNA, and 11 supernumerary subunits COX4I, COX5A, COX5B, COX6A, COX6B, COX6C, COX7A, COX7B, COX7C, COX8 and NDUFA4, which are encoded in the nuclear genome. The complex exists as a monomer or a dimer and forms supercomplexes (SCs) in the inner mitochondrial membrane with NADH-ubiquinone oxidoreductase (complex I, CI) and ubiquinol-cytochrome c oxidoreductase (cytochrome b-c1 complex, complex III, CIII), resulting in different assemblies (supercomplex SCI(1)III(2)IV(1) and megacomplex MCI(2)III(2)IV(2)).

It is found in the mitochondrion inner membrane. The enzyme catalyses 4 Fe(II)-[cytochrome c] + O2 + 8 H(+)(in) = 4 Fe(III)-[cytochrome c] + 2 H2O + 4 H(+)(out). Component of the cytochrome c oxidase, the last enzyme in the mitochondrial electron transport chain which drives oxidative phosphorylation. The respiratory chain contains 3 multisubunit complexes succinate dehydrogenase (complex II, CII), ubiquinol-cytochrome c oxidoreductase (cytochrome b-c1 complex, complex III, CIII) and cytochrome c oxidase (complex IV, CIV), that cooperate to transfer electrons derived from NADH and succinate to molecular oxygen, creating an electrochemical gradient over the inner membrane that drives transmembrane transport and the ATP synthase. Cytochrome c oxidase is the component of the respiratory chain that catalyzes the reduction of oxygen to water. Electrons originating from reduced cytochrome c in the intermembrane space (IMS) are transferred via the dinuclear copper A center (CU(A)) of subunit 2 and heme A of subunit 1 to the active site in subunit 1, a binuclear center (BNC) formed by heme A3 and copper B (CU(B)). The BNC reduces molecular oxygen to 2 water molecules using 4 electrons from cytochrome c in the IMS and 4 protons from the mitochondrial matrix. This Myxine glutinosa (Atlantic hagfish) protein is Cytochrome c oxidase subunit 3 (MT-CO3).